The primary structure comprises 150 residues: UPF0178 protein PP_5221 (150 aa).

Belongs to the UPF0178 family.

In Pseudomonas putida (strain ATCC 47054 / DSM 6125 / CFBP 8728 / NCIMB 11950 / KT2440), this protein is UPF0178 protein PP_5221.